The sequence spans 582 residues: Sodium-dependent low-affinity dicarboxylate transporter 1 (582 aa).

The next 12 helical transmembrane spans lie at 17–37 (SFVI…VGDS), 59–79 (ALPL…FGIM), 87–107 (AYLP…LAVE), 130–150 (VMAG…NTAT), 224–244 (LMLS…TGTA), 271–291 (IFAF…LYLL), 317–337 (FSFA…LWIL), 353–373 (EFVS…TLPE), 401–421 (FPWS…GVKE), 455–475 (TNVC…AELA), 482–502 (PLNF…LPVA), and 527–547 (VTLG…GFVF).

This sequence belongs to the SLC13A/DASS transporter (TC 2.A.47) family. NADC subfamily. As to expression, nad-1 and nad-2 are coexpressed in the intestinal tract from early larvae to adults, expression is from the pharynx through to the anus. Expression level is significantly greater in the anterior half of the intestine than in the posterior half.

It is found in the membrane. In terms of biological role, low affinity sodium-dicarboxylate cotransporter that accepts a range of tricarboxylic acid-cycle intermediates with 4-5 carbon atoms. There is no interaction with monocarboxylates. In Caenorhabditis elegans, this protein is Sodium-dependent low-affinity dicarboxylate transporter 1 (nac-1).